The primary structure comprises 140 residues: Transmembrane protein 107 (140 aa).

2 consecutive transmembrane segments (helical) span residues 7–27 and 53–73; these read LVPS…TLFW and LVAA…GFLS. A glycan (N-linked (GlcNAc...) asparagine) is linked at asparagine 79. 2 helical membrane passes run 83-103 and 113-133; these read SLIS…FIFE and IFVF…VTVF.

Part of the tectonic-like complex (also named B9 complex). Interacts with TMEM237, TMEM231, MKS1 and TMEM216.

Its subcellular location is the membrane. The protein localises to the cell projection. It is found in the cilium. Its function is as follows. Plays a role in cilia formation and embryonic patterning. Requires for normal Sonic hedgehog (Shh) signaling in the neural tube and acts in combination with GLI2 and GLI3 to pattern ventral and intermediate neuronal cell types. During ciliogenesis regulates the ciliary transition zone localization of some MKS complex proteins. The sequence is that of Transmembrane protein 107 from Homo sapiens (Human).